A 273-amino-acid chain; its full sequence is Beta-lactamase OXA-23 (273 aa).

Positions 1–17 (MNKYFTCYVVASLFLSG) are cleaved as a signal peptide. Serine 79 serves as the catalytic Acyl-ester intermediate. A beta-lactam is bound by residues serine 79, lysine 82, serine 126, threonine 217, tryptophan 219, and arginine 259. An N6-carboxylysine modification is found at lysine 82.

This sequence belongs to the class-D beta-lactamase family. In terms of assembly, monomer. Carboxylated on the epsilon-amino group of a lysine, with the resulting carbamate functional group serving as a general base. Probably N-carboxylated at Lys-82 at neutral pH in vivo and undergoes complete N-decarboxylation, at pH 4.1, in vitro.

The protein resides in the periplasm. The enzyme catalyses a beta-lactam + H2O = a substituted beta-amino acid. Its activity is regulated as follows. Inhibited by the desmethyl carbapenem, MA-1-206, via a covalent binding to Ser-79. In terms of biological role, class D beta-lactamase which confers resistance to the beta-lactam antibiotics, including ampicillin, and carbapenems such as imipenem and meropenem. Acts via hydrolysis of the beta-lactam ring. Has penicillin-, cephalosporin- and carbapenem-hydrolyzing activities, but lacks ceftazidime-hydrolyzing activity. The sequence is that of Beta-lactamase OXA-23 from Acinetobacter baumannii.